Reading from the N-terminus, the 437-residue chain is 3-phosphoshikimate 1-carboxyvinyltransferase (437 aa).

3-phosphoshikimate-binding residues include Lys-21, Ser-22, and Arg-26. Position 21 (Lys-21) interacts with phosphoenolpyruvate. Residues Gly-101 and Arg-129 each coordinate phosphoenolpyruvate. Residues Ser-172, Ser-173, Gln-174, Ser-200, Asp-314, and Lys-341 each contribute to the 3-phosphoshikimate site. A phosphoenolpyruvate-binding site is contributed by Gln-174. Asp-314 acts as the Proton acceptor in catalysis. Residues Arg-345, Arg-388, and Lys-414 each coordinate phosphoenolpyruvate.

Belongs to the EPSP synthase family. In terms of assembly, monomer.

Its subcellular location is the cytoplasm. It carries out the reaction 3-phosphoshikimate + phosphoenolpyruvate = 5-O-(1-carboxyvinyl)-3-phosphoshikimate + phosphate. It functions in the pathway metabolic intermediate biosynthesis; chorismate biosynthesis; chorismate from D-erythrose 4-phosphate and phosphoenolpyruvate: step 6/7. Catalyzes the transfer of the enolpyruvyl moiety of phosphoenolpyruvate (PEP) to the 5-hydroxyl of shikimate-3-phosphate (S3P) to produce enolpyruvyl shikimate-3-phosphate and inorganic phosphate. The chain is 3-phosphoshikimate 1-carboxyvinyltransferase from Clostridioides difficile (strain 630) (Peptoclostridium difficile).